Consider the following 621-residue polypeptide: MSLDIAKYPTLALAENPDELRSLPKESLPKLCDELRQYLLDSVSRSSGHFASGLGTVELTVALHYVYQTPFDHLVWDVGHQAYPHKILTGRRDKIATIRQKNGLHPFPWRAESEYDVLSVGHSSTSISAGLGMAVAAAREGKNRRTVCVIGDGAITAGMAFEAMNHAGDIDPDMLVVLNDNEMSISENVGALNNHLAQLLSGKLYSTLREGGKKVLSGLPPIKELVKRTEEHLKGMVVPGTLFEELGFNYIGPVDGHDVQGLVATLKNMRDLKGPQLLHIMTKKGRGYAPAEKDPISFHAVPKFDPASGTLPKSAGGLPTYSKVFGDWLCETAAKDSSLMAITPAMREGSGMVQFSRDYPQQYFDVAIAEQHAVTFAAGLAIGGYKPVVAIYSTFLQRAYDQLIHDVAIQKLPVMFAIDRGGIVGADGQTHQGAFDLSFMRCIPTMVIMTPSDENECRQMLYTGYHYNEGPSAVRYPRGNGTGAPLEPLNSLPIGKGVVRREGEKLAILNFGTLLPEAAQVAETLNATLVDMRFVKPLDEQLILELAASHDALVTLEENAIMGGAGSGVNELLMARRRVVPVLNIGLPDFFVSQGSQEEVRSDLGLDAAGIQRQIEVWLAQ.

Thiamine diphosphate is bound by residues His-80 and 121 to 123 (GHS). Asp-152 contributes to the Mg(2+) binding site. Thiamine diphosphate contacts are provided by residues 153–154 (GA), Asn-181, Tyr-288, and Glu-370. Asn-181 serves as a coordination point for Mg(2+).

Belongs to the transketolase family. DXPS subfamily. In terms of assembly, homodimer. Requires Mg(2+) as cofactor. It depends on thiamine diphosphate as a cofactor.

It catalyses the reaction D-glyceraldehyde 3-phosphate + pyruvate + H(+) = 1-deoxy-D-xylulose 5-phosphate + CO2. It functions in the pathway metabolic intermediate biosynthesis; 1-deoxy-D-xylulose 5-phosphate biosynthesis; 1-deoxy-D-xylulose 5-phosphate from D-glyceraldehyde 3-phosphate and pyruvate: step 1/1. Catalyzes the acyloin condensation reaction between C atoms 2 and 3 of pyruvate and glyceraldehyde 3-phosphate to yield 1-deoxy-D-xylulose-5-phosphate (DXP). In Serratia proteamaculans (strain 568), this protein is 1-deoxy-D-xylulose-5-phosphate synthase.